The primary structure comprises 546 residues: Chaperonin GroEL (546 aa).

Residues threonine 30 to proline 33, lysine 51, aspartate 87 to threonine 91, glycine 415, asparagine 479 to alanine 481, and aspartate 495 contribute to the ATP site.

This sequence belongs to the chaperonin (HSP60) family. In terms of assembly, forms a cylinder of 14 subunits composed of two heptameric rings stacked back-to-back. Interacts with the co-chaperonin GroES.

The protein localises to the cytoplasm. The catalysed reaction is ATP + H2O + a folded polypeptide = ADP + phosphate + an unfolded polypeptide.. Functionally, together with its co-chaperonin GroES, plays an essential role in assisting protein folding. The GroEL-GroES system forms a nano-cage that allows encapsulation of the non-native substrate proteins and provides a physical environment optimized to promote and accelerate protein folding. This Azotobacter vinelandii protein is Chaperonin GroEL.